The following is a 603-amino-acid chain: MANMRVKFPTLVLLLGIVFLMAVSIGIAYGEKNAIKNHERPQEREQEERDPRQQPRPRHQEEQEREHGREEERNREPSRGRSESEESREEEREQRREPSRGREQEQQPQHGRREEEEEWQPRRQRPQSRREEREQEQGSSSSSGRQSGYERREQREEREQQQEQDSRSESRRQRNPYYFSYERFQTLYKNRNGQIRVLERFDQRTNRLENLQNYRIVEFQSKPNTLILPKHSDADYILVVLNGRATITIVNPDKRQAYNLEHGDALRLPAGTTSYILNPDDNQNLRVVKLAIPINNPGNFYDFYPSSTKDQQSYFNGFSRNTLEATFNTRYEEIQRIILGNEDGQEDEEQSRGQEQSHQDQGVIVRVSKEQIQELRKHAQSSSGKGKPSESGPFNLRSDEPIYSNKFGNFYEITPDRNPQAQDLDISLTFIEINEGGLLLPHYNSKAIFVVVVDEGEGNYELVGIRDQERQQDEQEQEEVRRYNAKLSEGDIFVIPAGHPISINASSNLRLLGFGINADENQRNFLAGSEDNVIRQLDKEVKQLTFPGSVEDVERLIKNQQQSYFANAQPQQQQQREKEGRRGRRGLSFPFRSLFTKLLSTIM.

The first 30 residues, 1–30 (MANMRVKFPTLVLLLGIVFLMAVSIGIAYG), serve as a signal peptide directing secretion. Residues 36–105 (KNHERPQERE…REPSRGREQE (70 aa)) show a composition bias toward basic and acidic residues. Disordered regions lie at residues 36–177 (KNHE…RNPY), 343–363 (DGQEDEEQSRGQEQSHQDQGV), and 375–399 (LRKHAQSSSGKGKPSESGPFNLRSD). The span at 137 to 147 (QGSSSSSGRQS) shows a compositional bias: low complexity. Basic and acidic residues predominate over residues 148–172 (GYERREQREEREQQQEQDSRSESRR). The 159-residue stretch at 177–335 (YYFSYERFQT…TFNTRYEEIQ (159 aa)) folds into the Cupin type-1 1 domain. A compositionally biased stretch (low complexity) spans 381 to 393 (SSSGKGKPSESGP). The Cupin type-1 2 domain maps to 394-554 (FNLRSDEPIY…TFPGSVEDVE (161 aa)). Asparagine 504 carries an N-linked (GlcNAc...) asparagine glycan. Residues 564 to 574 (YFANAQPQQQQ) are compositionally biased toward low complexity. Residues 564 to 583 (YFANAQPQQQQQREKEGRRG) are disordered.

Belongs to the 7S seed storage protein family. Component of globulins complexes which accumulate in seeds.

Its function is as follows. Seed storage protein. Accumulates during seed development and is hydrolyzed after germination to provide a carbon and nitrogen source for the developing seedling. This chain is Conglutin beta 2, found in Lupinus angustifolius (Narrow-leaved blue lupine).